The sequence spans 601 residues: Protein CT_858 (601 aa).

Belongs to the chlamydial CPn_1016/CT_858/TC_0248 family.

The protein is Protein CT_858 of Chlamydia trachomatis serovar D (strain ATCC VR-885 / DSM 19411 / UW-3/Cx).